The chain runs to 82 residues: Sec-independent protein translocase protein TatA (82 aa).

Residues 1 to 21 (MGGISIWQLLIIAVIIVLLFG) traverse the membrane as a helical segment. Residues 46-82 (DEPAKDAKKDADFVPQNLEKKEAETVEKQKQNDKEQA) form a disordered region.

Belongs to the TatA/E family. As to quaternary structure, the Tat system comprises two distinct complexes: a TatABC complex, containing multiple copies of TatA, TatB and TatC subunits, and a separate TatA complex, containing only TatA subunits. Substrates initially bind to the TatABC complex, which probably triggers association of the separate TatA complex to form the active translocon.

It is found in the cell inner membrane. In terms of biological role, part of the twin-arginine translocation (Tat) system that transports large folded proteins containing a characteristic twin-arginine motif in their signal peptide across membranes. TatA could form the protein-conducting channel of the Tat system. This chain is Sec-independent protein translocase protein TatA, found in Aliivibrio fischeri (strain MJ11) (Vibrio fischeri).